Here is a 503-residue protein sequence, read N- to C-terminus: Glycerol kinase (503 aa).

Thr-14 is a binding site for ADP. Positions 14, 15, and 16 each coordinate ATP. Thr-14 is a binding site for sn-glycerol 3-phosphate. ADP is bound at residue Arg-18. The sn-glycerol 3-phosphate site is built by Arg-84, Glu-85, Tyr-136, and Asp-246. 5 residues coordinate glycerol: Arg-84, Glu-85, Tyr-136, Asp-246, and Gln-247. Positions 268 and 311 each coordinate ADP. Residues Thr-268, Gly-311, Gln-315, and Gly-412 each coordinate ATP. Residues Gly-412 and Asn-416 each coordinate ADP.

This sequence belongs to the FGGY kinase family. In terms of assembly, homotetramer and homodimer (in equilibrium). Heterodimer with EIIA-Glc. Binds 1 zinc ion per glycerol kinase EIIA-Glc dimer. The zinc ion is important for dimerization.

The enzyme catalyses glycerol + ATP = sn-glycerol 3-phosphate + ADP + H(+). It participates in polyol metabolism; glycerol degradation via glycerol kinase pathway; sn-glycerol 3-phosphate from glycerol: step 1/1. Activity of this regulatory enzyme is affected by several metabolites. Allosterically and non-competitively inhibited by fructose 1,6-bisphosphate (FBP) and unphosphorylated phosphocarrier protein EIIA-Glc (III-Glc), an integral component of the bacterial phosphotransferase (PTS) system. Its function is as follows. Key enzyme in the regulation of glycerol uptake and metabolism. Catalyzes the phosphorylation of glycerol to yield sn-glycerol 3-phosphate. The chain is Glycerol kinase from Klebsiella pneumoniae (strain 342).